The primary structure comprises 81 residues: ATP synthase subunit c (81 aa).

2 helical membrane-spanning segments follow: residues 6-26 and 57-77; these read ASAS…GPGI and LAFM…LLFA.

Belongs to the ATPase C chain family. As to quaternary structure, F-type ATPases have 2 components, F(1) - the catalytic core - and F(0) - the membrane proton channel. F(1) has five subunits: alpha(3), beta(3), gamma(1), delta(1), epsilon(1). F(0) has four main subunits: a(1), b(1), b'(1) and c(10-14). The alpha and beta chains form an alternating ring which encloses part of the gamma chain. F(1) is attached to F(0) by a central stalk formed by the gamma and epsilon chains, while a peripheral stalk is formed by the delta, b and b' chains.

It is found in the cellular thylakoid membrane. Functionally, f(1)F(0) ATP synthase produces ATP from ADP in the presence of a proton or sodium gradient. F-type ATPases consist of two structural domains, F(1) containing the extramembraneous catalytic core and F(0) containing the membrane proton channel, linked together by a central stalk and a peripheral stalk. During catalysis, ATP synthesis in the catalytic domain of F(1) is coupled via a rotary mechanism of the central stalk subunits to proton translocation. In terms of biological role, key component of the F(0) channel; it plays a direct role in translocation across the membrane. A homomeric c-ring of between 10-14 subunits forms the central stalk rotor element with the F(1) delta and epsilon subunits. The protein is ATP synthase subunit c of Gloeothece citriformis (strain PCC 7424) (Cyanothece sp. (strain PCC 7424)).